The chain runs to 295 residues: Trimeric intracellular cation channel type A (295 aa).

The Lumenal segment spans residues 1-18; it reads MEVLDVLNLGEIAQYFSK. A helical membrane pass occupies residues 19–37; the sequence is MAMFPVFDVAYYIVSILYL. At 38–51 the chain is on the cytoplasmic side; the sequence is KYEPGAVEVSRRSP. Residues 52 to 75 traverse the membrane as a helical segment; sequence VASWLCAMLYCFGSYILADIMLGV. Position 74 (Gly-74) interacts with Ca(2+). At 76-86 the chain is on the lumenal side; that stretch reads CPIDYFHNNSH. Residues 87–106 traverse the membrane as a helical segment; it reads ILLASAVWYLIFFCPLNLFY. At 107–144 the chain is on the cytoplasmic side; it reads KCVAFMPVKLVLVALKEVVRTRKIAAGVHHAHHAYHHG. Lys-122 and Arg-126 together coordinate a 1,2-diacyl-sn-glycero-3-phospho-(1D-myo-inositol-4,5-bisphosphate). The helical transmembrane segment at 145–162 threads the bilayer; sequence WLIMVITGYVKGSGVALM. Residues 163–182 are Lumenal-facing; it reads SNFEQLLRGVWKPETNEVLN. The helical transmembrane segment at 183 to 199 threads the bilayer; sequence MSFPTKASLYGAILFTL. The Cytoplasmic segment spans residues 200–210; sequence QEAHVLPVSKS. Residues 211 to 227 traverse the membrane as a helical segment; the sequence is TLICLFTLFMVSSKVFM. At 228 to 236 the chain is on the lumenal side; the sequence is TARHSHGSP. The chain crosses the membrane as a helical span at residues 237 to 255; sequence FALIESWVCHVLFGSPLGT. Residues 256 to 295 lie on the Cytoplasmic side of the membrane; sequence EDAHDHHHAAPAAAPAPLSPAKNKEELSEGTRKRKSKKAE. Residues 259-295 are disordered; the sequence is HDHHHAAPAAAPAPLSPAKNKEELSEGTRKRKSKKAE. The segment covering 265 to 276 has biased composition (low complexity); that stretch reads APAAAPAPLSPA. The span at 277-286 shows a compositional bias: basic and acidic residues; that stretch reads KNKEELSEGT.

Belongs to the TMEM38 family. Homotrimer; conformation seems to be controled by binding to diacylglycerol (DAG).

Its subcellular location is the sarcoplasmic reticulum membrane. The protein localises to the nucleus membrane. The catalysed reaction is K(+)(in) = K(+)(out). With respect to regulation, channel activity is activated by a change of voltage within the sarcoplasmic reticulum lumen and blocked by luminal high Ca(2+) levels. Functionally, intracellular monovalent cation channel required for maintenance of rapid intracellular calcium release. Acts as a potassium counter-ion channel that functions in synchronization with calcium release from intracellular stores. Opened by a change of voltage within the sarcoplasmic reticulum lumen. This Danio rerio (Zebrafish) protein is Trimeric intracellular cation channel type A (tmem38a).